A 543-amino-acid polypeptide reads, in one-letter code: CTP synthase (543 aa).

The amidoligase domain stretch occupies residues 1–265 (MTRYIFVTGG…DDFVVERFGL (265 aa)). Serine 13 contacts CTP. Residue serine 13 participates in UTP binding. ATP-binding positions include 14–19 (SLGKGI) and aspartate 71. Residues aspartate 71 and glutamate 139 each contribute to the Mg(2+) site. CTP contacts are provided by residues 146-148 (DIE), 186-191 (KTKPTQ), and lysine 222. Residues 186 to 191 (KTKPTQ) and lysine 222 contribute to the UTP site. The region spanning 290-541 (TIAMVGKYME…VKAALAQHQK (252 aa)) is the Glutamine amidotransferase type-1 domain. Glycine 351 contacts L-glutamine. Residue cysteine 378 is the Nucleophile; for glutamine hydrolysis of the active site. Residues 379-382 (LGMQ), glutamate 402, and arginine 469 each bind L-glutamine. Catalysis depends on residues histidine 514 and glutamate 516.

The protein belongs to the CTP synthase family. In terms of assembly, homotetramer.

It carries out the reaction UTP + L-glutamine + ATP + H2O = CTP + L-glutamate + ADP + phosphate + 2 H(+). The catalysed reaction is L-glutamine + H2O = L-glutamate + NH4(+). It catalyses the reaction UTP + NH4(+) + ATP = CTP + ADP + phosphate + 2 H(+). It participates in pyrimidine metabolism; CTP biosynthesis via de novo pathway; CTP from UDP: step 2/2. With respect to regulation, allosterically activated by GTP, when glutamine is the substrate; GTP has no effect on the reaction when ammonia is the substrate. The allosteric effector GTP functions by stabilizing the protein conformation that binds the tetrahedral intermediate(s) formed during glutamine hydrolysis. Inhibited by the product CTP, via allosteric rather than competitive inhibition. Its function is as follows. Catalyzes the ATP-dependent amination of UTP to CTP with either L-glutamine or ammonia as the source of nitrogen. Regulates intracellular CTP levels through interactions with the four ribonucleotide triphosphates. This is CTP synthase from Pseudomonas fluorescens (strain Pf0-1).